We begin with the raw amino-acid sequence, 256 residues long: METQALQKVEQYALKKQNIFASSKIRYVLRSILASIFIGFGITAASKTGSYFFMADSPFAFPAAAVTFGAAILMIAYGGGDLFTGNTFYFTYTALRKKISWRDTLYLWMSSYAGNLIGAILFAILISATGLFEEPSVHSFLIHLAEHKMEPPASELFFRGMLCNWLVCLAFFIPMSLKGEGAKLFTMMLFVFCFFISGFEHSIANMCTFAISLLIEHPDTVTLMGAVRNLIPVTLGNLTAGIVMMGWMYYTLNPDQ.

A run of 7 helical transmembrane segments spans residues 32–52 (ILAS…GSYF), 59–79 (FAFP…AYGG), 112–132 (YAGN…TGLF), 156–176 (LFFR…IPMS), 184–204 (LFTM…HSIA), 207–227 (CTFA…MGAV), and 230–250 (LIPV…WMYY).

This sequence belongs to the FNT transporter (TC 1.A.16) family.

The protein resides in the cell membrane. This is an uncharacterized protein from Bacillus subtilis (strain 168).